The chain runs to 137 residues: MLQPKRTKYRKQFKGRIKGVAKGGSDLAFGEFGLKAQEPNRVNAREIEAARRAITRHMKRAGRVWIRVFPDVPVTAKPTEVRMGKGKGSVEYWACKVKPGRMMFEIDGVSEELAREALRLGAAKLSVKTRFVQRIAE.

It belongs to the universal ribosomal protein uL16 family. As to quaternary structure, part of the 50S ribosomal subunit.

In terms of biological role, binds 23S rRNA and is also seen to make contacts with the A and possibly P site tRNAs. This Sinorhizobium medicae (strain WSM419) (Ensifer medicae) protein is Large ribosomal subunit protein uL16.